The chain runs to 513 residues: ATP synthase subunit alpha (513 aa).

169-176 serves as a coordination point for ATP; it reads GDRQTGKT.

Belongs to the ATPase alpha/beta chains family. F-type ATPases have 2 components, CF(1) - the catalytic core - and CF(0) - the membrane proton channel. CF(1) has five subunits: alpha(3), beta(3), gamma(1), delta(1), epsilon(1). CF(0) has three main subunits: a(1), b(2) and c(9-12). The alpha and beta chains form an alternating ring which encloses part of the gamma chain. CF(1) is attached to CF(0) by a central stalk formed by the gamma and epsilon chains, while a peripheral stalk is formed by the delta and b chains.

It is found in the cell inner membrane. It carries out the reaction ATP + H2O + 4 H(+)(in) = ADP + phosphate + 5 H(+)(out). In terms of biological role, produces ATP from ADP in the presence of a proton gradient across the membrane. The alpha chain is a regulatory subunit. This is ATP synthase subunit alpha from Klebsiella pneumoniae (strain 342).